The sequence spans 567 residues: PEX5-related protein (567 aa).

Residues 56–105 (SEPVSQPQTKAKKSEPSSKSSSLKKKADGSDLISADAEQRAQALRGPETS) are disordered. S146 bears the Phosphoserine mark. Residues 150–169 (LWSAEHRSQPELSTGKSALN) are disordered. 3 positions are modified to phosphoserine: S194, S198, and S202. TPR repeat units lie at residues 267–300 (WPGAFEEGLKRLKEGDLPVTILFMEAAILQDPGD), 301–334 (AEAWQFLGITQAENENEQAAIVALQRCLELQPNN), and 336–368 (KALMALAVSYTNTSHQQDACEALKNWIKQNPKY). A phosphoserine mark is found at S386 and S388. TPR repeat units follow at residues 415–448 (PDLQTGLGVLFHLSGEFNRAIDAFNAALTVRPED), 450–482 (SLWNRLGATLANGDRSEEAVEAYTRALEIQPGF), and 484–516 (RSRYNLGISCINLGAYREAVSNFLTALSLQRKS).

Belongs to the peroxisomal targeting signal receptor family. In terms of assembly, interacts with RAB8B. Forms an obligate 4:4 complex with HCN2. Interacts with HCN3. Interacts with HCN4 with a 4:4 HCN4:PEX5L stoichiometry; reduces the effects of cAMP on the voltage-dependence and rate of activation of HCN4.

Its subcellular location is the cytoplasm. The protein localises to the membrane. In terms of biological role, accessory subunit of hyperpolarization-activated cyclic nucleotide-gated (HCN) channels, regulating their cell-surface expression and cyclic nucleotide dependence. The polypeptide is PEX5-related protein (Pex5l) (Mus musculus (Mouse)).